The chain runs to 149 residues: Deoxyuridine 5'-triphosphate nucleotidohydrolase (149 aa).

Residues 68–70 (RSG), asparagine 81, 85–87 (TVD), and lysine 95 contribute to the substrate site.

This sequence belongs to the dUTPase family. Mg(2+) is required as a cofactor.

The enzyme catalyses dUTP + H2O = dUMP + diphosphate + H(+). The protein operates within pyrimidine metabolism; dUMP biosynthesis; dUMP from dCTP (dUTP route): step 2/2. This enzyme is involved in nucleotide metabolism: it produces dUMP, the immediate precursor of thymidine nucleotides and it decreases the intracellular concentration of dUTP so that uracil cannot be incorporated into DNA. The protein is Deoxyuridine 5'-triphosphate nucleotidohydrolase of Wolinella succinogenes (strain ATCC 29543 / DSM 1740 / CCUG 13145 / JCM 31913 / LMG 7466 / NCTC 11488 / FDC 602W) (Vibrio succinogenes).